The sequence spans 410 residues: Bifunctional enzyme IspD/IspF (410 aa).

The tract at residues 1-257 (MSHDPVVPSA…AGAGSASSRL (257 aa)) is 2-C-methyl-D-erythritol 4-phosphate cytidylyltransferase. Residues 258–410 (RSGIGTDVHA…AVATALVERL (153 aa)) are 2-C-methyl-D-erythritol 2,4-cyclodiphosphate synthase. The a divalent metal cation site is built by Asp-264 and His-266. Residues 264–266 (DVH) and 290–291 (HS) each bind 4-CDP-2-C-methyl-D-erythritol 2-phosphate. His-298 is an a divalent metal cation binding site. 4-CDP-2-C-methyl-D-erythritol 2-phosphate is bound by residues 312–314 (DIG), 385–388 (TTTD), Phe-392, and Arg-395.

This sequence in the N-terminal section; belongs to the IspD/TarI cytidylyltransferase family. IspD subfamily. It in the C-terminal section; belongs to the IspF family. The cofactor is a divalent metal cation.

It catalyses the reaction 2-C-methyl-D-erythritol 4-phosphate + CTP + H(+) = 4-CDP-2-C-methyl-D-erythritol + diphosphate. It carries out the reaction 4-CDP-2-C-methyl-D-erythritol 2-phosphate = 2-C-methyl-D-erythritol 2,4-cyclic diphosphate + CMP. It participates in isoprenoid biosynthesis; isopentenyl diphosphate biosynthesis via DXP pathway; isopentenyl diphosphate from 1-deoxy-D-xylulose 5-phosphate: step 2/6. It functions in the pathway isoprenoid biosynthesis; isopentenyl diphosphate biosynthesis via DXP pathway; isopentenyl diphosphate from 1-deoxy-D-xylulose 5-phosphate: step 4/6. In terms of biological role, bifunctional enzyme that catalyzes the formation of 4-diphosphocytidyl-2-C-methyl-D-erythritol from CTP and 2-C-methyl-D-erythritol 4-phosphate (MEP) (IspD), and catalyzes the conversion of 4-diphosphocytidyl-2-C-methyl-D-erythritol 2-phosphate (CDP-ME2P) to 2-C-methyl-D-erythritol 2,4-cyclodiphosphate (ME-CPP) with a corresponding release of cytidine 5-monophosphate (CMP) (IspF). In Clavibacter michiganensis subsp. michiganensis (strain NCPPB 382), this protein is Bifunctional enzyme IspD/IspF.